We begin with the raw amino-acid sequence, 622 residues long: Chaperone protein HscA homolog (622 aa).

This sequence belongs to the heat shock protein 70 family.

Its function is as follows. Chaperone involved in the maturation of iron-sulfur cluster-containing proteins. Has a low intrinsic ATPase activity which is markedly stimulated by HscB. The protein is Chaperone protein HscA homolog of Burkholderia mallei (strain NCTC 10247).